Reading from the N-terminus, the 96-residue chain is UPF0235 protein SO_3356 (96 aa).

The protein belongs to the UPF0235 family.

This chain is UPF0235 protein SO_3356, found in Shewanella oneidensis (strain ATCC 700550 / JCM 31522 / CIP 106686 / LMG 19005 / NCIMB 14063 / MR-1).